Here is a 317-residue protein sequence, read N- to C-terminus: Ribosomal RNA small subunit methyltransferase H (317 aa).

S-adenosyl-L-methionine is bound by residues 36–38 (GGH), Asp56, Phe80, Asp102, and Gln109.

Belongs to the methyltransferase superfamily. RsmH family.

It is found in the cytoplasm. It catalyses the reaction cytidine(1402) in 16S rRNA + S-adenosyl-L-methionine = N(4)-methylcytidine(1402) in 16S rRNA + S-adenosyl-L-homocysteine + H(+). Functionally, specifically methylates the N4 position of cytidine in position 1402 (C1402) of 16S rRNA. The polypeptide is Ribosomal RNA small subunit methyltransferase H (Baumannia cicadellinicola subsp. Homalodisca coagulata).